The primary structure comprises 557 residues: Putative sensory transducer protein (557 aa).

A helical membrane pass occupies residues 122 to 145 (TASTVMIVVIFVGILIAIALGVFI). Residues 147 to 199 (RIISKPIGQMVEAADRLALGDVEVDVKAETRDEIGKLAESFKRMIENIREQAY) form the HAMP domain. The 230-residue stretch at 243-472 (VAAQVAAGAK…ESAAASEELS (230 aa)) folds into the Methyl-accepting transducer domain. Residue Gln-268 is modified to Glutamate methyl ester (Gln). Residue Glu-274 is modified to Glutamate methyl ester (Glu). A Glutamate methyl ester (Gln) modification is found at Gln-281. Glu-463 carries the glutamate methyl ester (Glu) modification. Positions 511-541 (DYTENKQPKSYSKEENGEYSDGKETAEKDVG) are enriched in basic and acidic residues. Positions 511–542 (DYTENKQPKSYSKEENGEYSDGKETAEKDVGG) are disordered.

The protein belongs to the methyl-accepting chemotaxis (MCP) protein family.

Its subcellular location is the cell membrane. Its function is as follows. May bind attractants or detect changes in the extracellular concentration of soluble sugars. The sequence is that of Putative sensory transducer protein from Acetivibrio thermocellus (strain ATCC 27405 / DSM 1237 / JCM 9322 / NBRC 103400 / NCIMB 10682 / NRRL B-4536 / VPI 7372) (Clostridium thermocellum).